Consider the following 448-residue polypeptide: Exoglucanase GH7B (448 aa).

The first 17 residues, M1–G17, serve as a signal peptide directing secretion. At Q18 the chain carries Pyrrolidone carboxylic acid. Disulfide bonds link C62–C83 and C73–C79. Substrate-binding positions include Y97, D119 to I120, and K197. 6 disulfides stabilise this stretch: C154/C415, C188/C226, C192/C225, C246/C271, C254/C259, and C276/C350. E228 acts as the Nucleophile in catalysis. Substrate-binding positions include D230–E233 and H244. E233 serves as the catalytic Proton donor/acceptor. 2 residues coordinate substrate: R266 and D274. Substrate is bound by residues W396 and R412.

The protein belongs to the glycosyl hydrolase 7 (cellulase C) family. In terms of assembly, monomer. In terms of tissue distribution, highly expressed in the hepatopancreas (at protein level). Little or no expression detected in the hindgut or the rest of the body (at protein level).

It localises to the secreted. The catalysed reaction is Hydrolysis of (1-&gt;4)-beta-D-glucosidic linkages in cellulose and cellotetraose, releasing cellobiose from the non-reducing ends of the chains.. Exocellobiohydrolase (CBH) that catalyzes the hydrolysis of 1,4-beta-D-glucosidic bonds in cellulose to release the disaccharide cellobiose. The degradation of cellulose involves an interplay between different cellulolytic enzymes. Hydrolysis starts with endoglucanases (EGs), which cut internal beta-1,4-glucosidic bonds in cellulose to reduce the polymerization degree of the substrate and create new chain ends for exocellobiohydrolases (CBHs). The CBHs release the disaccharide cellobiose from the non-reducing end of the cellulose polymer chain. Finally, beta-1,4-glucosidases hydrolyze the cellobiose and other short cello-oligosaccharides into glucose units. The polypeptide is Exoglucanase GH7B (Limnoria quadripunctata (Gribble)).